The chain runs to 340 residues: 4-hydroxy-2-oxovalerate aldolase (340 aa).

The region spanning 8–260 (VILHDMSLRD…SHGINLYDIM (253 aa)) is the Pyruvate carboxyltransferase domain. Residue 16–17 (RD) participates in substrate binding. Position 17 (Asp17) interacts with Mn(2+). His20 acts as the Proton acceptor in catalysis. 2 residues coordinate substrate: Ser170 and His199. Residues His199 and His201 each contribute to the Mn(2+) site. Tyr290 lines the substrate pocket.

Belongs to the 4-hydroxy-2-oxovalerate aldolase family.

The catalysed reaction is (S)-4-hydroxy-2-oxopentanoate = acetaldehyde + pyruvate. This chain is 4-hydroxy-2-oxovalerate aldolase, found in Shewanella pealeana (strain ATCC 700345 / ANG-SQ1).